Reading from the N-terminus, the 111-residue chain is uncharacterized protein (111 aa).

Positions methionine 1–valine 26 are disordered.

This is an uncharacterized protein from Caenorhabditis elegans.